Reading from the N-terminus, the 88-residue chain is Elongation factor 1-beta (88 aa).

The protein belongs to the EF-1-beta/EF-1-delta family.

In terms of biological role, promotes the exchange of GDP for GTP in EF-1-alpha/GDP, thus allowing the regeneration of EF-1-alpha/GTP that could then be used to form the ternary complex EF-1-alpha/GTP/AAtRNA. The chain is Elongation factor 1-beta from Halobacterium salinarum (strain ATCC 29341 / DSM 671 / R1).